A 593-amino-acid chain; its full sequence is Tyrosine-protein phosphatase non-receptor type 11 (593 aa).

The residue at position 2 (threonine 2) is an N-acetylthreonine. SH2 domains lie at 6–102 (WFHP…KYPL) and 112–216 (WFHG…KQPL). Phosphotyrosine occurs at positions 62 and 66. The Tyrosine-protein phosphatase domain occupies 247-521 (FWEEFETLQQ…RFIYMAVQHY (275 aa)). Residues aspartate 425, 459–465 (CSAGIGR), and glutamine 506 contribute to the substrate site. Residue cysteine 459 is the Phosphocysteine intermediate of the active site. Phosphotyrosine; by PDGFR occurs at positions 542 and 580.

Belongs to the protein-tyrosine phosphatase family. Non-receptor class 2 subfamily. In terms of assembly, interacts with CD84 and with phosphorylated SIT1 and MZPL1. Interacts with FCRL4, FCRL6 and ANKHD1. Interacts with GAREM1 (tyrosine phosphorylated); the interaction increases MAPK/ERK activity and does not affect the GRB2/SOS complex formation. Interacts with PTPNS1 and BCAR3. Interacts with phosphorylated LIME1. Interacts with SHB and INPP5D/SHIP1. Interacts with KIR2DL1; the interaction is enhanced by ARRB2. Interacts with GAB2. Interacts with TERT; the interaction retains TERT in the nucleus. Interacts with PECAM1 and FER. Interacts with EPHA2 (activated); participates in PTK2/FAK1 dephosphorylation in EPHA2 downstream signaling. Interacts with MILR1 (tyrosine phosphorylated). Interacts with FLT1 (tyrosine-phosphorylated), FLT3 (tyrosine-phosphorylated), FLT4 (tyrosine-phosphorylated), KIT and GRB2. Interacts with ROS1; mediates PTPN11 phosphorylation. Interacts with PDGFRA (tyrosine phosphorylated). Interacts with PDGFRB (tyrosine phosphorylated); this interaction increases the PTPN11 phosphatase activity. Interacts (via SH2 domain) with TEK/TIE2 (tyrosine phosphorylated). Interacts with CEACAM1 (via cytoplasmic domain); this interaction depends on the monomer/dimer equilibrium and is phosphorylation-dependent. Interacts with MPIG6B (via ITIM motif). Interacts with SIGLEC10. Interacts with Lilrb4a (when tyrosine phosphorylated). Interacts with SIGLEC10. Interacts with CLEC12B (via ITIM motif); this interaction triggers dephosphorylation and activation of PTPN11. Interacts (via SH2 domains) with NEDD9/CAS-L; the interaction is enhanced when NEDD9/CAS-L is tyrosine phosphorylated. Interacts with PIRB; when PIRB is phosphorylated by LYN at 'Tyr-794' and 'Tyr-824'. In terms of processing, phosphorylated on Tyr-542 and Tyr-580 upon receptor protein tyrosine kinase activation; which creates a binding site for GRB2 and other SH2-containing proteins. Phosphorylated upon activation of the receptor-type kinase FLT3. Phosphorylated by activated PDGFRB. Phosphorylated upon activation of the receptor-type kinase PDGFRA. In terms of tissue distribution, highly expressed in brain, heart and kidney.

It localises to the cytoplasm. It carries out the reaction O-phospho-L-tyrosyl-[protein] + H2O = L-tyrosyl-[protein] + phosphate. Acts downstream of various receptor and cytoplasmic protein tyrosine kinases to participate in the signal transduction from the cell surface to the nucleus. Positively regulates MAPK signal transduction pathway. Dephosphorylates GAB1, ARHGAP35 and EGFR. Dephosphorylates ROCK2 at 'Tyr-722' resulting in stimulation of its RhoA binding activity. Dephosphorylates CDC73. Dephosphorylates SOX9 on tyrosine residues, leading to inactivate SOX9 and promote ossification. Dephosphorylates tyrosine-phosphorylated NEDD9/CAS-L. In Mus musculus (Mouse), this protein is Tyrosine-protein phosphatase non-receptor type 11 (Ptpn11).